The chain runs to 619 residues: Dihydroxy-acid dehydratase (619 aa).

Asp-81 serves as a coordination point for Mg(2+). Cys-122 is a [2Fe-2S] cluster binding site. 2 residues coordinate Mg(2+): Asp-123 and Lys-124. N6-carboxylysine is present on Lys-124. Residue Cys-195 participates in [2Fe-2S] cluster binding. Residue Glu-491 coordinates Mg(2+). Ser-517 (proton acceptor) is an active-site residue.

It belongs to the IlvD/Edd family. Homodimer. [2Fe-2S] cluster serves as cofactor. Requires Mg(2+) as cofactor.

It carries out the reaction (2R)-2,3-dihydroxy-3-methylbutanoate = 3-methyl-2-oxobutanoate + H2O. The catalysed reaction is (2R,3R)-2,3-dihydroxy-3-methylpentanoate = (S)-3-methyl-2-oxopentanoate + H2O. It functions in the pathway amino-acid biosynthesis; L-isoleucine biosynthesis; L-isoleucine from 2-oxobutanoate: step 3/4. It participates in amino-acid biosynthesis; L-valine biosynthesis; L-valine from pyruvate: step 3/4. Its function is as follows. Functions in the biosynthesis of branched-chain amino acids. Catalyzes the dehydration of (2R,3R)-2,3-dihydroxy-3-methylpentanoate (2,3-dihydroxy-3-methylvalerate) into 2-oxo-3-methylpentanoate (2-oxo-3-methylvalerate) and of (2R)-2,3-dihydroxy-3-methylbutanoate (2,3-dihydroxyisovalerate) into 2-oxo-3-methylbutanoate (2-oxoisovalerate), the penultimate precursor to L-isoleucine and L-valine, respectively. This is Dihydroxy-acid dehydratase from Sphingopyxis alaskensis (strain DSM 13593 / LMG 18877 / RB2256) (Sphingomonas alaskensis).